The chain runs to 480 residues: Glutamate--tRNA ligase (480 aa).

Residues 21–31 (PSPTGYLHVGG) carry the 'HIGH' region motif. Zn(2+)-binding residues include Cys110, Cys112, Cys137, and His139. Residues 248 to 252 (KLSKR) carry the 'KMSKS' region motif. Residue Lys251 participates in ATP binding.

The protein belongs to the class-I aminoacyl-tRNA synthetase family. Glutamate--tRNA ligase type 1 subfamily. Monomer. Zn(2+) serves as cofactor.

It localises to the cytoplasm. It catalyses the reaction tRNA(Glu) + L-glutamate + ATP = L-glutamyl-tRNA(Glu) + AMP + diphosphate. Catalyzes the attachment of glutamate to tRNA(Glu) in a two-step reaction: glutamate is first activated by ATP to form Glu-AMP and then transferred to the acceptor end of tRNA(Glu). In Actinobacillus succinogenes (strain ATCC 55618 / DSM 22257 / CCUG 43843 / 130Z), this protein is Glutamate--tRNA ligase.